The primary structure comprises 202 residues: MSTDTSKPARLPVTVEKPTPYTFDLGLLLANDPNPVNVPKTTDTQVLEQHLASVARDGAQVLINQLLTTTTITATKDGVLLTLPPPTTPLPREKPVPQPKPETKWQAFARRRGIKPKTREQRRNLQYNPTTGQWERKWGYKGANKRGETDPIIEVSAAKEAMRPEGTSVRGDKRREIRARVKKNQKQMLRNQRIAAEKMGKK.

The segment at 82–103 (TLPPPTTPLPREKPVPQPKPET) is disordered.

The protein belongs to the RRS1 family. Component of a hexameric 5S RNP precursor complex, composed of 5S RNA, RRS1, RPF2, RPL5, RPL11 and SYO1; this complex acts as a precursor for ribosome assembly.

It localises to the nucleus. Functionally, involved in ribosomal large subunit assembly. The sequence is that of Ribosome biogenesis regulatory protein homolog from Chaetomium thermophilum (strain DSM 1495 / CBS 144.50 / IMI 039719) (Thermochaetoides thermophila).